Reading from the N-terminus, the 464-residue chain is tRNA-2-methylthio-N(6)-dimethylallyladenosine synthase (464 aa).

An MTTase N-terminal domain is found at 19-135 (GSYWITTFGC…LENLLGKVDL (117 aa)). 6 residues coordinate [4Fe-4S] cluster: C28, C64, C98, C170, C174, and C177. The region spanning 156–394 (RESSICGWVN…DLVEKTARSR (239 aa)) is the Radical SAM core domain. The 69-residue stretch at 396 to 464 (QRYIDNIESV…PFSLTGELSL (69 aa)) folds into the TRAM domain.

This sequence belongs to the methylthiotransferase family. MiaB subfamily. Monomer. It depends on [4Fe-4S] cluster as a cofactor.

It is found in the cytoplasm. The enzyme catalyses N(6)-dimethylallyladenosine(37) in tRNA + (sulfur carrier)-SH + AH2 + 2 S-adenosyl-L-methionine = 2-methylsulfanyl-N(6)-dimethylallyladenosine(37) in tRNA + (sulfur carrier)-H + 5'-deoxyadenosine + L-methionine + A + S-adenosyl-L-homocysteine + 2 H(+). Catalyzes the methylthiolation of N6-(dimethylallyl)adenosine (i(6)A), leading to the formation of 2-methylthio-N6-(dimethylallyl)adenosine (ms(2)i(6)A) at position 37 in tRNAs that read codons beginning with uridine. This Prochlorococcus marinus (strain MIT 9301) protein is tRNA-2-methylthio-N(6)-dimethylallyladenosine synthase.